The sequence spans 1234 residues: 1-phosphatidylinositol 4,5-bisphosphate phosphodiesterase beta-3 (1234 aa).

Ala2 carries the N-acetylalanine modification. Positions 315–466 (MDMTQPLSAY…LMGRILVKNK (152 aa)) constitute a PI-PLC X-box domain. Active-site residues include His330 and His377. Residues 465–586 (NKKRHRPSTG…GTASSEVNAT (122 aa)) form a disordered region. Phosphoserine occurs at positions 472, 488, 493, and 535. Positions 486–513 (EQSNSALSESSAATEPSSPQLGSPSSDS) are enriched in low complexity. Over residues 554 to 566 (REDEEEDEEEEET) the composition is skewed to acidic residues. Residues 577 to 586 (GTASSEVNAT) show a composition bias toward polar residues. One can recognise a PI-PLC Y-box domain in the interval 589–705 (MSTLVNYVEP…GYLLKPEFMR (117 aa)). Residues 706–834 (RPDKSFDPFT…RNEANQPLCL (129 aa)) enclose the C2 domain. The segment covering 886 to 907 (ASTEMCQETPSQQQGSQLSSNP) has biased composition (polar residues). The tract at residues 886–936 (ASTEMCQETPSQQQGSQLSSNPVPNPLDDSPRWPPGPTTSPTSTSLSSPGQ) is disordered. Low complexity predominate over residues 924-934 (TSPTSTSLSSP). Phosphoserine occurs at positions 925 and 1105. The tract at residues 1196-1234 (SEGLGDGPLVACASNGHAAGSGGHQSGADSESQEENTQL) is disordered. Residues 1231–1234 (NTQL) form an interaction with SHANK2 region.

As to quaternary structure, interacts with LPAR2. Interacts with SHANK2. The cofactor is Ca(2+). In terms of tissue distribution, expressed in parotid gland, brain, liver, uterus, lung, heart, adrenal gland, and ovary. Not detected in spleen, pancreas, intestine, thymus or kidney.

The protein resides in the cytoplasm. Its subcellular location is the membrane. The protein localises to the nucleus. The enzyme catalyses a 1,2-diacyl-sn-glycero-3-phospho-(1D-myo-inositol-4,5-bisphosphate) + H2O = 1D-myo-inositol 1,4,5-trisphosphate + a 1,2-diacyl-sn-glycerol + H(+). It catalyses the reaction a 1,2-diacyl-sn-glycero-3-phospho-(1D-myo-inositol) + H2O = 1D-myo-inositol 1-phosphate + a 1,2-diacyl-sn-glycerol + H(+). With respect to regulation, activated by G(q)/G(11) G alpha proteins in response to ligand-binding to G protein-coupled receptors. In terms of biological role, catalyzes the production of the second messenger molecules diacylglycerol (DAG) and inositol 1,4,5-trisphosphate (IP3). Key transducer of G protein-coupled receptor signaling: activated by G(q)/G(11) G alpha proteins downstream of G protein-coupled receptors activation. In neutrophils, participates in a phospholipase C-activating N-formyl peptide-activated GPCR (G protein-coupled receptor) signaling pathway by promoting RASGRP4 activation by DAG, to promote neutrophil functional responses. This chain is 1-phosphatidylinositol 4,5-bisphosphate phosphodiesterase beta-3, found in Rattus norvegicus (Rat).